Here is a 356-residue protein sequence, read N- to C-terminus: S-adenosylmethionine:tRNA ribosyltransferase-isomerase (356 aa).

This sequence belongs to the QueA family. In terms of assembly, monomer.

Its subcellular location is the cytoplasm. The catalysed reaction is 7-aminomethyl-7-carbaguanosine(34) in tRNA + S-adenosyl-L-methionine = epoxyqueuosine(34) in tRNA + adenine + L-methionine + 2 H(+). It participates in tRNA modification; tRNA-queuosine biosynthesis. Its function is as follows. Transfers and isomerizes the ribose moiety from AdoMet to the 7-aminomethyl group of 7-deazaguanine (preQ1-tRNA) to give epoxyqueuosine (oQ-tRNA). This chain is S-adenosylmethionine:tRNA ribosyltransferase-isomerase, found in Escherichia coli O6:K15:H31 (strain 536 / UPEC).